A 416-amino-acid polypeptide reads, in one-letter code: GTPase ERA1, chloroplastic (416 aa).

Residues 1–53 (MELGLALRLVAPPPLLPCLSRRALSLPPDFVSSRVLRGRRIHASRLKHGAGVV) constitute a chloroplast transit peptide. Residues 117–287 (RSGYVAVLGK…KEWILSKLPL (171 aa)) form the Era-type G domain. The segment at 125–132 (GKPNVGKS) is G1. Position 125 to 132 (125 to 132 (GKPNVGKS)) interacts with GTP. The tract at residues 151–155 (QTTRH) is G2. The G3 stretch occupies residues 172 to 175 (DTPG). Residues 172–176 (DTPGV) and 237–240 (NKKD) contribute to the GTP site. The G4 stretch occupies residues 237–240 (NKKD). Residues 266–268 (ISA) are G5. Positions 318–395 (YRQEIPYSCQ…YLEVEVKVKE (78 aa)) constitute a KH type-2 domain.

This sequence belongs to the TRAFAC class TrmE-Era-EngA-EngB-Septin-like GTPase superfamily. Era GTPase family.

It localises to the plastid. It is found in the chloroplast stroma. Its subcellular location is the chloroplast nucleoid. Its function is as follows. Nuclear genome-encoded probable GTPase involved in ribosome biogenesis in chloroplasts. Plays a role in 16S rRNA maturation in plastids and may contribute to the assembly of the small (30S) ribosomal subunit. This chain is GTPase ERA1, chloroplastic, found in Zea mays (Maize).